A 328-amino-acid chain; its full sequence is UPF0421 protein SE_1574 (328 aa).

4 helical membrane passes run 26 to 46 (LFCM…IVTI), 61 to 81 (LPAT…FGDQ), 109 to 129 (AVLT…FNFF), and 132 to 152 (LLTA…ILPP).

This sequence belongs to the UPF0421 family.

It is found in the cell membrane. This Staphylococcus epidermidis (strain ATCC 12228 / FDA PCI 1200) protein is UPF0421 protein SE_1574.